Consider the following 304-residue polypeptide: Methionyl-tRNA formyltransferase (304 aa).

110–113 (SLLP) is a (6S)-5,6,7,8-tetrahydrofolate binding site.

The protein belongs to the Fmt family.

The catalysed reaction is L-methionyl-tRNA(fMet) + (6R)-10-formyltetrahydrofolate = N-formyl-L-methionyl-tRNA(fMet) + (6S)-5,6,7,8-tetrahydrofolate + H(+). Attaches a formyl group to the free amino group of methionyl-tRNA(fMet). The formyl group appears to play a dual role in the initiator identity of N-formylmethionyl-tRNA by promoting its recognition by IF2 and preventing the misappropriation of this tRNA by the elongation apparatus. The protein is Methionyl-tRNA formyltransferase of Gluconobacter oxydans (strain 621H) (Gluconobacter suboxydans).